Reading from the N-terminus, the 1260-residue chain is Methionine synthase (1260 aa).

The region spanning 13 to 333 is the Hcy-binding domain; the sequence is FGIIRKILSE…DHIRAFCNAI (321 aa). C255, C318, and C319 together coordinate Zn(2+). The Pterin-binding domain occupies 364–625; sequence FVNVGERCNV…IPKDLLKLVE (262 aa). A B12-binding N-terminal domain is found at 655–749; that stretch reads EVEEWRNKPV…FMEEEKRLKR (95 aa). Methylcob(III)alamin-binding positions include E699, 775-779, H778, S823, T827, and A879; that span reads GDVHD. The 118-residue stretch at 766–883 folds into the B12-binding domain; sequence GVVVLATVKG…VHVLDASRSV (118 aa). An AdoMet activation domain is found at 916-1256; it reads SLKDRKYTSL…LSSILSYDRL (341 aa). Residues D966, R1163, and 1218–1219 each bind S-adenosyl-L-methionine; that span reads YF.

The protein belongs to the vitamin-B12 dependent methionine synthase family. Methylcob(III)alamin serves as cofactor. The cofactor is Zn(2+).

The catalysed reaction is (6S)-5-methyl-5,6,7,8-tetrahydrofolate + L-homocysteine = (6S)-5,6,7,8-tetrahydrofolate + L-methionine. Its pathway is amino-acid biosynthesis; L-methionine biosynthesis via de novo pathway; L-methionine from L-homocysteine (MetH route): step 1/1. Functionally, catalyzes the transfer of a methyl group from methyl-cobalamin to homocysteine, yielding enzyme-bound cob(I)alamin and methionine. Subsequently, remethylates the cofactor using methyltetrahydrofolate. In Dictyostelium discoideum (Social amoeba), this protein is Methionine synthase (mtr).